The primary structure comprises 294 residues: MLKGAVTALITPFDDNGAIDEKAFCNFVEWQITQGINGVSPVGTTGESPTLTHEEHKRIIELCVEQVAKRVPVVAGAGSNSTSEAVELAKHAEKAGADAVLVVTPYYNRPNQRGLYTHFSSIAKAISIPIIIYNIPSRSVIDMAVETMRDLCRDFKNIIGVKDATGKIERASEQREKCGKDFVQLSGDDCTALGFNAHGGVGCISVSSNVAPKLCAQLHAACLCSDYKTALKLNDLLMPLNRAVFIEPSPAGIKYAAAKLGLCGTIVRSPIVPLSDTTKKIIDEALYHAGLLKE.

Thr45 is a binding site for pyruvate. Catalysis depends on Tyr133, which acts as the Proton donor/acceptor. Lys162 serves as the catalytic Schiff-base intermediate with substrate. A pyruvate-binding site is contributed by Ile204.

It belongs to the DapA family. As to quaternary structure, homotetramer; dimer of dimers.

The protein resides in the cytoplasm. It carries out the reaction L-aspartate 4-semialdehyde + pyruvate = (2S,4S)-4-hydroxy-2,3,4,5-tetrahydrodipicolinate + H2O + H(+). It functions in the pathway amino-acid biosynthesis; L-lysine biosynthesis via DAP pathway; (S)-tetrahydrodipicolinate from L-aspartate: step 3/4. In terms of biological role, catalyzes the condensation of (S)-aspartate-beta-semialdehyde [(S)-ASA] and pyruvate to 4-hydroxy-tetrahydrodipicolinate (HTPA). This Bartonella henselae (strain ATCC 49882 / DSM 28221 / CCUG 30454 / Houston 1) (Rochalimaea henselae) protein is 4-hydroxy-tetrahydrodipicolinate synthase.